The chain runs to 372 residues: Dual-specificity RNA methyltransferase RlmN (372 aa).

Glu-94 serves as the catalytic Proton acceptor. The region spanning 100–339 (DGDRATLCVS…VTIRKTRGDD (240 aa)) is the Radical SAM core domain. Cys-107 and Cys-344 form a disulfide bridge. Residues Cys-114, Cys-118, and Cys-121 each coordinate [4Fe-4S] cluster. S-adenosyl-L-methionine contacts are provided by residues 168-169 (GE), Ser-200, 222-224 (SLH), and Asn-301. The S-methylcysteine intermediate role is filled by Cys-344.

Belongs to the radical SAM superfamily. RlmN family. Requires [4Fe-4S] cluster as cofactor.

The protein localises to the cytoplasm. It catalyses the reaction adenosine(2503) in 23S rRNA + 2 reduced [2Fe-2S]-[ferredoxin] + 2 S-adenosyl-L-methionine = 2-methyladenosine(2503) in 23S rRNA + 5'-deoxyadenosine + L-methionine + 2 oxidized [2Fe-2S]-[ferredoxin] + S-adenosyl-L-homocysteine. It carries out the reaction adenosine(37) in tRNA + 2 reduced [2Fe-2S]-[ferredoxin] + 2 S-adenosyl-L-methionine = 2-methyladenosine(37) in tRNA + 5'-deoxyadenosine + L-methionine + 2 oxidized [2Fe-2S]-[ferredoxin] + S-adenosyl-L-homocysteine. Its function is as follows. Specifically methylates position 2 of adenine 2503 in 23S rRNA and position 2 of adenine 37 in tRNAs. m2A2503 modification seems to play a crucial role in the proofreading step occurring at the peptidyl transferase center and thus would serve to optimize ribosomal fidelity. The polypeptide is Dual-specificity RNA methyltransferase RlmN (Aliivibrio fischeri (strain MJ11) (Vibrio fischeri)).